Reading from the N-terminus, the 442-residue chain is tRNA modification GTPase MnmE (442 aa).

Positions 21, 79, and 118 each coordinate (6S)-5-formyl-5,6,7,8-tetrahydrofolate. The region spanning glycine 214 to asparagine 367 is the TrmE-type G domain. Asparagine 224 lines the K(+) pocket. GTP is bound by residues asparagine 224–serine 229, serine 243–threonine 249, and aspartate 268–glycine 271. Serine 228 contributes to the Mg(2+) binding site. Positions 243, 245, and 248 each coordinate K(+). Residue threonine 249 coordinates Mg(2+). Lysine 442 lines the (6S)-5-formyl-5,6,7,8-tetrahydrofolate pocket.

It belongs to the TRAFAC class TrmE-Era-EngA-EngB-Septin-like GTPase superfamily. TrmE GTPase family. As to quaternary structure, homodimer. Heterotetramer of two MnmE and two MnmG subunits. K(+) is required as a cofactor.

The protein localises to the cytoplasm. Functionally, exhibits a very high intrinsic GTPase hydrolysis rate. Involved in the addition of a carboxymethylaminomethyl (cmnm) group at the wobble position (U34) of certain tRNAs, forming tRNA-cmnm(5)s(2)U34. This Campylobacter jejuni subsp. doylei (strain ATCC BAA-1458 / RM4099 / 269.97) protein is tRNA modification GTPase MnmE.